Consider the following 300-residue polypeptide: Protein THYLAKOID FORMATION 1, chloroplastic (300 aa).

The N-terminal 67 residues, 1 to 67 (MAATAISSLS…SNVTADVPPV (67 aa)), are a transit peptide targeting the chloroplast. Residues 68-196 (SETKSKFLKA…IAGRAGSKEG (129 aa)) are Chloroplast intermembrane-facing. The chain crosses the membrane as a helical span at residues 197 to 219 (FSYSRFFAVGLFRLLELASATDP). Residues 220–300 (TVLDKLCASL…NPSFLVERKS (81 aa)) are Cytoplasmic-facing. A coiled-coil region spans residues 239–268 (DLDVYRNLLSKLVQAKELLKEYVEREKKKQ).

This sequence belongs to the THF1 family. In terms of assembly, interacts with GPA1. Ubiquitous. Present at higher level in hypocotyls (at protein level). Ubiquitously expressed in all organs, in roots of both light-grown and dark-grown seedlings. Highly expressed in the root apical meristems.

Its subcellular location is the plastid. It localises to the chloroplast outer membrane. The protein resides in the chloroplast stroma. Functionally, involved in a dynamic process of vesicle-mediated thylakoid membrane biogenesis. Required for the normal organization of vesicles into mature thylakoid stacks and ultimately for leaf development. Also involved in a sugar-signaling mechanism in roots by mediating signaling between the plasma membrane and the plastid. Probably acts downstream of the plasma membrane-delimited heterotrimeric G-protein GPA1 in a D-glucose signaling pathway. This Arabidopsis thaliana (Mouse-ear cress) protein is Protein THYLAKOID FORMATION 1, chloroplastic (THF1).